The chain runs to 457 residues: Transcription factor PCF7 (457 aa).

Positions 58 to 84 form a coiled coil; sequence STLHYLLQEKERAQQAHEQLQIYQQQQ. The interval 95-121 is disordered; that stretch reads RQPASRGPGGGGGGGDGGGSSGESTPV. The span at 101 to 115 shows a compositional bias: gly residues; the sequence is GPGGGGGGGDGGGSS. The TCP domain occupies 140–198; it reads RKDRHSKVCTARGLRDRRVRLAAHTAIRFYDVQDRLGYDRPSKAVDWLMRNAKAAIDEL. Disordered regions lie at residues 199-231 and 263-299; these read PDRA…GFGN and KSLF…SNQQ. The span at 212–230 shows a compositional bias: polar residues; sequence STEQPEGTEQANSTSYGFG. The segment covering 268–278 has biased composition (low complexity); sequence SSSTASGAASA.

In terms of assembly, forms homodimers and heterodimers.

It is found in the nucleus. Functionally, transcription activator. Binds the promoter core sequence 5'-GGNCC-3'. The sequence is that of Transcription factor PCF7 (PCF7) from Oryza sativa subsp. indica (Rice).